An 896-amino-acid chain; its full sequence is Alanine--tRNA ligase (896 aa).

Residues H574, H578, C677, and H681 each contribute to the Zn(2+) site.

This sequence belongs to the class-II aminoacyl-tRNA synthetase family. Zn(2+) serves as cofactor.

The protein localises to the cytoplasm. It catalyses the reaction tRNA(Ala) + L-alanine + ATP = L-alanyl-tRNA(Ala) + AMP + diphosphate. Its function is as follows. Catalyzes the attachment of alanine to tRNA(Ala) in a two-step reaction: alanine is first activated by ATP to form Ala-AMP and then transferred to the acceptor end of tRNA(Ala). Also edits incorrectly charged Ser-tRNA(Ala) and Gly-tRNA(Ala) via its editing domain. The sequence is that of Alanine--tRNA ligase from Mycoplasma capricolum subsp. capricolum (strain California kid / ATCC 27343 / NCTC 10154).